Consider the following 116-residue polypeptide: Iron-sulfur cluster insertion protein ErpA (116 aa).

Iron-sulfur cluster contacts are provided by Cys44, Cys108, and Cys110.

This sequence belongs to the HesB/IscA family. In terms of assembly, homodimer. It depends on iron-sulfur cluster as a cofactor.

Functionally, required for insertion of 4Fe-4S clusters for at least IspG. This chain is Iron-sulfur cluster insertion protein ErpA, found in Ectopseudomonas mendocina (strain ymp) (Pseudomonas mendocina).